Reading from the N-terminus, the 153-residue chain is MKVTRHEKILELIERKDIETQEELAEELRKSGIEITQATVSRDIKELKLIKVLGEQGKYKYAAIVKNENDLSDKLANIFSHSVVSVENINNFVVVKTLSGSGNAAAEAIDSLNFKEIAGTIAGDNTIFIMARTSEQAFEIVKKMKRVIRERGV.

This sequence belongs to the ArgR family.

The protein resides in the cytoplasm. It functions in the pathway amino-acid biosynthesis; L-arginine biosynthesis [regulation]. Regulates arginine biosynthesis genes. The chain is Arginine repressor from Clostridium tetani (strain Massachusetts / E88).